A 270-amino-acid chain; its full sequence is uncharacterized protein (270 aa).

The first 22 residues, 1–22 (MGYIKRMALYMSVFLLIIFIVG), serve as a signal peptide directing secretion. A lipid anchor (N-palmitoyl cysteine) is attached at cysteine 23. The S-diacylglycerol cysteine moiety is linked to residue cysteine 23.

Belongs to the staphylococcal tandem lipoprotein family.

The protein resides in the cell membrane. This is an uncharacterized protein from Staphylococcus aureus (strain COL).